The chain runs to 650 residues: Fructose-1,6-bisphosphatase class 3 (650 aa).

The protein belongs to the FBPase class 3 family. Requires Mn(2+) as cofactor.

It catalyses the reaction beta-D-fructose 1,6-bisphosphate + H2O = beta-D-fructose 6-phosphate + phosphate. It functions in the pathway carbohydrate biosynthesis; gluconeogenesis. In Staphylococcus saprophyticus subsp. saprophyticus (strain ATCC 15305 / DSM 20229 / NCIMB 8711 / NCTC 7292 / S-41), this protein is Fructose-1,6-bisphosphatase class 3.